The primary structure comprises 447 residues: Na(+)/H(+) antiporter NhaA 2 (447 aa).

Transmembrane regions (helical) follow at residues Val34 to Trp54, Leu77 to Leu97, Ala115 to Val135, Gly146 to Gly166, Phe176 to Tyr196, Ile200 to Gln220, Val290 to Gly310, Pro321 to Thr341, Trp359 to Ile379, and Phe393 to Leu413.

The protein belongs to the NhaA Na(+)/H(+) (TC 2.A.33) antiporter family.

The protein resides in the cell membrane. The catalysed reaction is Na(+)(in) + 2 H(+)(out) = Na(+)(out) + 2 H(+)(in). Its function is as follows. Na(+)/H(+) antiporter that extrudes sodium in exchange for external protons. The sequence is that of Na(+)/H(+) antiporter NhaA 2 from Mycolicibacterium gilvum (strain PYR-GCK) (Mycobacterium gilvum (strain PYR-GCK)).